A 476-amino-acid chain; its full sequence is tRNA (cytosine(72)-C(5))-methyltransferase NSUN6 (476 aa).

In terms of domain architecture, PUA spans 111–203 (QGEVIVGAQC…IGIRMTEPIY (93 aa)). S-adenosyl-L-methionine is bound by residues 242-248 (CAAPGGK), Asp266, Asp293, and Asp323. The active-site Nucleophile is Cys373. Lys419 carries the post-translational modification N6-acetyllysine.

The protein belongs to the class I-like SAM-binding methyltransferase superfamily. RsmB/NOP family.

The protein localises to the cytoplasm. The catalysed reaction is cytidine(72) in tRNA(Thr) + S-adenosyl-L-methionine = 5-methylcytidine(72) in tRNA(Thr) + S-adenosyl-L-homocysteine + H(+). The enzyme catalyses cytidine(72) in tRNA(Cys) + S-adenosyl-L-methionine = 5-methylcytidine(72) in tRNA(Cys) + S-adenosyl-L-homocysteine + H(+). Functionally, S-adenosyl-L-methionine-dependent methyltransferase that specifically methylates the C5 position of cytosine 72 in tRNA(Thr)(TGT) and tRNA(Cys)(GCA). In vitro also methylates tRNA(Thr)(AGT). Methylation requires, in the acceptor stem region, the presence of the 3'-CCA terminus, the target site C72, the discriminator base U73, and the second and third base pairs (2:71 and 3:70) in the tRNA substrates. The protein is tRNA (cytosine(72)-C(5))-methyltransferase NSUN6 of Mus musculus (Mouse).